A 55-amino-acid polypeptide reads, in one-letter code: ATP synthase protein 8 (55 aa).

A helical transmembrane segment spans residues 6–26; the sequence is PHPWFAILVFSWIFFLVILPK.

Belongs to the ATPase protein 8 family. As to quaternary structure, F-type ATPases have 2 components, CF(1) - the catalytic core - and CF(0) - the membrane proton channel.

It localises to the mitochondrion membrane. In terms of biological role, mitochondrial membrane ATP synthase (F(1)F(0) ATP synthase or Complex V) produces ATP from ADP in the presence of a proton gradient across the membrane which is generated by electron transport complexes of the respiratory chain. F-type ATPases consist of two structural domains, F(1) - containing the extramembraneous catalytic core and F(0) - containing the membrane proton channel, linked together by a central stalk and a peripheral stalk. During catalysis, ATP synthesis in the catalytic domain of F(1) is coupled via a rotary mechanism of the central stalk subunits to proton translocation. Part of the complex F(0) domain. Minor subunit located with subunit a in the membrane. The polypeptide is ATP synthase protein 8 (MT-ATP8) (Squalus acanthias (Spiny dogfish)).